A 113-amino-acid polypeptide reads, in one-letter code: UPF0342 protein SEQ_0993 (113 aa).

The protein belongs to the UPF0342 family.

This chain is UPF0342 protein SEQ_0993, found in Streptococcus equi subsp. equi (strain 4047).